A 343-amino-acid chain; its full sequence is Protein RecA (343 aa).

64 to 71 (GPESSGKT) lines the ATP pocket.

Belongs to the RecA family.

Its subcellular location is the cytoplasm. Functionally, can catalyze the hydrolysis of ATP in the presence of single-stranded DNA, the ATP-dependent uptake of single-stranded DNA by duplex DNA, and the ATP-dependent hybridization of homologous single-stranded DNAs. It interacts with LexA causing its activation and leading to its autocatalytic cleavage. In Bacillus cereus (strain B4264), this protein is Protein RecA.